Consider the following 549-residue polypeptide: MKNINPTQTSAWQALQKHYDEMKDVTIAELFANDSDRFAKFSATFDDLMLVDFSKNRITEETLAKLQDLAKETDLAGAIKSMFSGEKINRTEDRAVLHVALRNRSNTPIIVDGKDVMPEVNAVLEKMKTFSQAIISGQWKGYTGKAITDVVNIGIGGSDLGPFMVTEALRPYKNHLNMHFVSNVDGTHIAEVLKKVNPETTLFLVASKTFTTQETMTNAHSARDWFLKTAGDEKHVAKHFAALSTNAKAVGEFGIDTANMFEFWDWVGGRYSLWSAIGLSIILSVGFDNFVELLSGAHAMDKHFSTTPAEKNLPILLALIGIWYNNFFGAETEAILPYDQYMHRFAAYFQQGNMESNGKYVDRNGNAVDYQTGPIIWGEPGTNGQHAFYQLIHQGTKMVPCDFIAPAITHNPLSDHHQKLLSNFFAQTEALAFGKSREVVEQEYRDQGKDPAQLEHVVPFKVFEGNRPTNSILLREITPFSLGALIALYEHKIFTQGVILNIFTFDQWGVELGKQLANRILPELGDDKAISSHDSSTNGLINRYKAWRA.

Catalysis depends on glutamate 355, which acts as the Proton donor. Catalysis depends on residues histidine 386 and lysine 514.

It belongs to the GPI family.

It localises to the cytoplasm. It catalyses the reaction alpha-D-glucose 6-phosphate = beta-D-fructose 6-phosphate. The protein operates within carbohydrate biosynthesis; gluconeogenesis. It functions in the pathway carbohydrate degradation; glycolysis; D-glyceraldehyde 3-phosphate and glycerone phosphate from D-glucose: step 2/4. Its function is as follows. Catalyzes the reversible isomerization of glucose-6-phosphate to fructose-6-phosphate. The protein is Glucose-6-phosphate isomerase of Salmonella paratyphi C (strain RKS4594).